The sequence spans 356 residues: 3-dehydroquinate synthase (356 aa).

Residues 106–110, 130–131, lysine 143, and lysine 152 contribute to the NAD(+) site; these read GVVGD and TT. Residues glutamate 185, histidine 248, and histidine 265 each coordinate Zn(2+).

It belongs to the sugar phosphate cyclases superfamily. Dehydroquinate synthase family. NAD(+) serves as cofactor. It depends on Co(2+) as a cofactor. Requires Zn(2+) as cofactor.

The protein localises to the cytoplasm. The catalysed reaction is 7-phospho-2-dehydro-3-deoxy-D-arabino-heptonate = 3-dehydroquinate + phosphate. Its pathway is metabolic intermediate biosynthesis; chorismate biosynthesis; chorismate from D-erythrose 4-phosphate and phosphoenolpyruvate: step 2/7. Catalyzes the conversion of 3-deoxy-D-arabino-heptulosonate 7-phosphate (DAHP) to dehydroquinate (DHQ). This is 3-dehydroquinate synthase from Caldanaerobacter subterraneus subsp. tengcongensis (strain DSM 15242 / JCM 11007 / NBRC 100824 / MB4) (Thermoanaerobacter tengcongensis).